A 162-amino-acid polypeptide reads, in one-letter code: Scytalone dehydratase-like protein claB (162 aa).

Tyr48 is a binding site for substrate. Catalysis depends on residues His83 and His108.

This sequence belongs to the scytalone dehydratase family.

The protein operates within pigment biosynthesis. Scytalone dehydratase-like protein; part of the gene cluster that mediates the biosynthesis of the bianthraquinone cladofulvin, a conidial pigment not required for virulence but that plays a role in fitness and resistance to environmental stresses including UV light and low-temperature stress. The pathway begins with the synthesis of atrochrysone thioester by the polyketide synthase (PKS) claG. The atrochrysone carboxyl ACP thioesterase claF then breaks the thioester bond and releases the atrochrysone carboxylic acid from claG. This compound is decarboxylated by claH to yield emodin, which is further converted to chrysophanol hydroquinone by the reductase claC and the dehydratase claB. The cytochrome P450 monooxygenase claM then catalyzes the dimerization of nataloe-emodin to cladofulvin. This Passalora fulva (Tomato leaf mold) protein is Scytalone dehydratase-like protein claB.